A 171-amino-acid chain; its full sequence is Large ribosomal subunit protein uL22 (171 aa).

It belongs to the universal ribosomal protein uL22 family.

The sequence is that of Large ribosomal subunit protein uL22 (RPL17) from Zea mays (Maize).